Reading from the N-terminus, the 358-residue chain is tRNA-specific 2-thiouridylase MnmA (358 aa).

ATP-binding positions include 6–13 and L32; that span reads AMSGGVDS. C101 (nucleophile) is an active-site residue. A disulfide bridge connects residues C101 and C193. G125 contributes to the ATP binding site. Positions 143–145 are interaction with tRNA; sequence KDQ. The Cysteine persulfide intermediate role is filled by C193.

Belongs to the MnmA/TRMU family.

Its subcellular location is the cytoplasm. It carries out the reaction S-sulfanyl-L-cysteinyl-[protein] + uridine(34) in tRNA + AH2 + ATP = 2-thiouridine(34) in tRNA + L-cysteinyl-[protein] + A + AMP + diphosphate + H(+). Catalyzes the 2-thiolation of uridine at the wobble position (U34) of tRNA, leading to the formation of s(2)U34. This Mycobacterium leprae (strain Br4923) protein is tRNA-specific 2-thiouridylase MnmA.